Reading from the N-terminus, the 173-residue chain is MTASCPPPSTSEPSREEQARALCLRLLTARARTRAELHGRLAKRGYPDDVSTAVLDRLAAVGLIDDADFAQQWVQSRRAHAGKSKRALAAELHTKGVDNDVITSVLAGIDAGAERDRAEQLVRSKLRRETLAQDDARVTRRLVGMLARRGYSQNLACEVVLAELAAERERRRV.

This sequence belongs to the RecX family.

The protein localises to the cytoplasm. Its function is as follows. Modulates RecA activity. The chain is Regulatory protein RecX from Mycobacterium avium (strain 104).